The chain runs to 942 residues: MTHRDSTGPVIGLKLVTLLFTLSPELLFLGAGLKLKENGYDGLLVAINPRVPEDLKLITNIKEMITEASFYLFNATKRRVFFRNVQILVPATWTDHNYSRVRQESYDKANVIVAEQSEEHGDDPYTLQHRGCGQEGRYIHFTPSFLLNDELAAGYGARGRVFVHEWAHLRWGVFDEYNNDKPFYVNGRNEIQVTRCSSDITGVFVCEKGLCPHEDCIISKIFREGCTFLYNSTQNATGSIMFMPSLPSVVEFCNESTHNQEAPNLQNQVCSLRSTWDVITASSDLNHSLPVHGVGLPAPPTFSLLQAGDRVVCLVIDVSRKMAEGDRLLRLQQAAELYLMQVVEAHTFVGIVTFDSKGEIRASLQQIYSDDDRKLLVSYLPTAVSTDAETNICAGVKKGFEVVEERNGRADGSVLILVTSGADEHIANCLLTSMNSGSTIHSMALGSSAARKVGELSRLTGGLKFFIPDKFTSNGMTEAFVRISSGTGDIFQQSLQVESVCETVQPQHQLADTMTVDSAVGNDTLFLVTWQTGGPPEIALLDPSGRKYNTGDFIINLAFRTASLKIPGTAKHGHWTYTLNNTHHSPQALKVTVASRASSLAMSPATLEAFVERDSTYFPQPVIIYANVRKGLHPILNATVVATVEPEAGDPVVLQLLDGGAGADVIRNDGIYSRYFSSFAVSGSYSLTVHVRHSPSTSTLALPVPGNHAMYVPGYITNDNIQMNAPKNLGHRPVKERWGFSRVSSGGSFSVLGVPDGPHPDMFPPCKITDLEAMKVEDDVVLSWTAPGEDFDQGQTTSYEIRMSRSLWNIRDDFDNAILVNSSELVPQHAGTRETFTFSPKLVTHELDHELAEDAQEPYIVYVALRAMDRSSLRSAVSNIALVSMSLPPNSSPVVSRDDLILKGVLTTVGLIAILCLIMVVAHCIFNRKKRPSRKENETKFL.

An N-terminal signal peptide occupies residues 1–32 (MTHRDSTGPVIGLKLVTLLFTLSPELLFLGAG). The Extracellular segment spans residues 33–905 (LKLKENGYDG…SRDDLILKGV (873 aa)). The tract at residues 54 to 205 (DLKLITNIKE…CSSDITGVFV (152 aa)) is metalloprotease domain. 2 N-linked (GlcNAc...) asparagine glycosylation sites follow: Asn-74 and Asn-97. A Zn(2+)-binding site is contributed by His-164. The active site involves Glu-165. 2 residues coordinate Zn(2+): His-168 and Asp-175. 4 N-linked (GlcNAc...) asparagine glycosylation sites follow: Asn-231, Asn-235, Asn-254, and Asn-286. The VWFA domain maps to 311–483 (VVCLVIDVSR…NGMTEAFVRI (173 aa)). Residues Asn-522, Asn-580, Asn-637, and Asn-821 are each glycosylated (N-linked (GlcNAc...) asparagine). A helical membrane pass occupies residues 906-926 (LTTVGLIAILCLIMVVAHCIF). At 927 to 942 (NRKKRPSRKENETKFL) the chain is on the cytoplasmic side.

This sequence belongs to the CLCR family. Post-translationally, the translation product is autoproteolytically cleaved by the metalloprotease domain in the endoplasmic reticulum into a N-terminal and a C-terminal products that remain physically associated with each other. The cleavage is necessary for calcium-activated chloride channel (CaCC) activation activity. In terms of processing, N-glycosylated. In terms of tissue distribution, highly expressed in eye, spleen, lung, kidney, uterus, and endothelial cells. Weakly expressed in heart and throughout the gastrointestinal tract. Highly expressed in mammary cell lines. Its expression in immortalized cell line HC11 correlates with slow or arrested growth. Re-expression in mammary tumor cells reduces colony survival.

It is found in the cell membrane. The protein localises to the basal cell membrane. Its subcellular location is the cell junction. Plays a role in modulating chloride current across the plasma membrane in a calcium-dependent manner, and cell adhesion. Involved in basal cell adhesion and/or stratification of squamous epithelia. May act as a tumor suppressor in breast and colorectal cancer. Plays a key role for cell adhesion in the beginning stages of lung metastasis via the binding to ITGB4. This is Calcium-activated chloride channel regulator 2 (Clca2) from Mus musculus (Mouse).